Reading from the N-terminus, the 123-residue chain is MAKIKARDLRGKKKEELLKQLDDLKVELSQLRVAKVTGGAASKLSKIRVVRKSIARVLTVINQTQKENLRKFYKGKKYKPLDLRPKKTRAMRRRLNKHEEGLKTKKQQRKERLYPPRKYAVKA.

The segment at 84–123 (RPKKTRAMRRRLNKHEEGLKTKKQQRKERLYPPRKYAVKA) is disordered. Residues 86-96 (KKTRAMRRRLN) show a composition bias toward basic residues.

It belongs to the universal ribosomal protein uL29 family. In terms of assembly, component of the large ribosomal subunit.

Its subcellular location is the cytoplasm. Its function is as follows. Component of the large ribosomal subunit. The ribosome is a large ribonucleoprotein complex responsible for the synthesis of proteins in the cell. The polypeptide is Large ribosomal subunit protein uL29 (RPL35) (Ophiophagus hannah (King cobra)).